We begin with the raw amino-acid sequence, 84 residues long: uncharacterized protein (84 aa).

A helical membrane pass occupies residues 13 to 35 (TTLVLTIISTTTTTLFAIIQLYL). A coiled-coil region spans residues 41-84 (LKDAVKEIVNSELSNLKTEIEELKIKQDELSRQVEEIKRKLDQK).

It localises to the host membrane. This is an uncharacterized protein from Sulfolobus islandicus rod-shaped virus 1 (SIRV-1).